The chain runs to 83 residues: Retinal cone rhodopsin-sensitive cGMP 3',5'-cyclic phosphodiesterase subunit gamma (83 aa).

Residues 1 to 17 are compositionally biased toward polar residues; that stretch reads MSDNTVLAPPTSNQGPT. The disordered stretch occupies residues 1 to 51; it reads MSDNTVLAPPTSNQGPTTPRKGPPKFKQRQTRQFKSKPPKKGVKGFGDDIP. A compositionally biased stretch (basic residues) spans 22-43; the sequence is GPPKFKQRQTRQFKSKPPKKGV.

The protein belongs to the rod/cone cGMP-PDE gamma subunit family. Tetramer composed of two catalytic chains (alpha and beta), and two inhibitory chains (gamma).

The catalysed reaction is 3',5'-cyclic GMP + H2O = GMP + H(+). Its function is as follows. Participates in processes of transmission and amplification of the visual signal. cGMP-PDEs are the effector molecules in G-protein-mediated phototransduction in vertebrate rods and cones. In Bos taurus (Bovine), this protein is Retinal cone rhodopsin-sensitive cGMP 3',5'-cyclic phosphodiesterase subunit gamma (PDE6H).